The chain runs to 123 residues: Large ribosomal subunit protein bL12 (123 aa).

The protein belongs to the bacterial ribosomal protein bL12 family. As to quaternary structure, homodimer. Part of the ribosomal stalk of the 50S ribosomal subunit. Forms a multimeric L10(L12)X complex, where L10 forms an elongated spine to which 2 to 4 L12 dimers bind in a sequential fashion. Binds GTP-bound translation factors.

Its function is as follows. Forms part of the ribosomal stalk which helps the ribosome interact with GTP-bound translation factors. Is thus essential for accurate translation. The polypeptide is Large ribosomal subunit protein bL12 (Burkholderia vietnamiensis (strain G4 / LMG 22486) (Burkholderia cepacia (strain R1808))).